The sequence spans 394 residues: MTTLTPLRSVTVNNTYPYTIAIGPGLLHDPLRLAATIRGRHALILSDSEVAPRYAAQLQETLLRARPDLHLNVFTLPAGETSKSLENFSAAIAQLATLGATRDACLFALGGGVIGDLAGFTAACWMRGIDYVQVPTTLLAMVDSSVGGKTAVDIPQGKNMVGAFHPPRAVIADTDTLATLPLRELRAGLSEVIKYGAIRDPVFFHWLQTTREALLARDPAALAQAIARSCEHKADIVGRDPLEKGERVLLNLGHTFGHAIETAQGYSTPGSNNLNHGEAVAVGMVLAARLSNALSLAPAQDTETLKNLLDAYGLPTVLPSGLTPEMLLERMRLDKKNIAGRLRLVLWRGIGHAEAVSDVDEATVRQILANSTNQHTTYSPHQHATTKPPNRRPH.

Residues 112–116, 136–137, K149, K158, and 176–179 contribute to the NAD(+) site; these read GVIGD, TT, and TLAT. Zn(2+) contacts are provided by E191, H254, and H276. Over residues 371-388 the composition is skewed to polar residues; that stretch reads STNQHTTYSPHQHATTKP. The interval 371–394 is disordered; the sequence is STNQHTTYSPHQHATTKPPNRRPH.

It belongs to the sugar phosphate cyclases superfamily. Dehydroquinate synthase family. NAD(+) is required as a cofactor. The cofactor is Co(2+). It depends on Zn(2+) as a cofactor.

It is found in the cytoplasm. The enzyme catalyses 7-phospho-2-dehydro-3-deoxy-D-arabino-heptonate = 3-dehydroquinate + phosphate. The protein operates within metabolic intermediate biosynthesis; chorismate biosynthesis; chorismate from D-erythrose 4-phosphate and phosphoenolpyruvate: step 2/7. Its function is as follows. Catalyzes the conversion of 3-deoxy-D-arabino-heptulosonate 7-phosphate (DAHP) to dehydroquinate (DHQ). The protein is 3-dehydroquinate synthase of Xylella fastidiosa (strain 9a5c).